The primary structure comprises 506 residues: Galactose/methyl galactoside import ATP-binding protein MglA (506 aa).

ABC transporter domains follow at residues 14–249 (LEMS…VGRS) and 264–506 (VILE…SLHL). 46–53 (GENGAGKS) serves as a coordination point for ATP.

This sequence belongs to the ABC transporter superfamily. Galactose/methyl galactoside importer (TC 3.A.1.2.3) family. As to quaternary structure, the complex is composed of one ATP-binding protein (MglA), two transmembrane proteins (MglC) and a solute-binding protein (MglB).

The protein localises to the cell inner membrane. It carries out the reaction D-galactose(out) + ATP + H2O = D-galactose(in) + ADP + phosphate + H(+). The catalysed reaction is methyl beta-D-galactoside(out) + ATP + H2O = methyl beta-D-galactoside(in) + ADP + phosphate + H(+). Part of the ABC transporter complex MglABC involved in galactose/methyl galactoside import. Responsible for energy coupling to the transport system. In Escherichia coli O157:H7, this protein is Galactose/methyl galactoside import ATP-binding protein MglA.